The primary structure comprises 328 residues: DNA-directed RNA polymerase subunit alpha (328 aa).

Residues 1 to 234 (MVREKVKVST…DLFIPFLQAE (234 aa)) are alpha N-terminal domain (alpha-NTD). Residues 268–328 (IALKSIFIDQ…KQIMSILEKK (61 aa)) form an alpha C-terminal domain (alpha-CTD) region.

The protein belongs to the RNA polymerase alpha chain family. In plastids the minimal PEP RNA polymerase catalytic core is composed of four subunits: alpha, beta, beta', and beta''. When a (nuclear-encoded) sigma factor is associated with the core the holoenzyme is formed, which can initiate transcription.

It localises to the plastid. Its subcellular location is the chloroplast. The enzyme catalyses RNA(n) + a ribonucleoside 5'-triphosphate = RNA(n+1) + diphosphate. DNA-dependent RNA polymerase catalyzes the transcription of DNA into RNA using the four ribonucleoside triphosphates as substrates. This is DNA-directed RNA polymerase subunit alpha from Citrus sinensis (Sweet orange).